A 476-amino-acid chain; its full sequence is Proline--tRNA ligase 2 (476 aa).

It belongs to the class-II aminoacyl-tRNA synthetase family. ProS type 3 subfamily. Homodimer.

It is found in the cytoplasm. It catalyses the reaction tRNA(Pro) + L-proline + ATP = L-prolyl-tRNA(Pro) + AMP + diphosphate. Functionally, catalyzes the attachment of proline to tRNA(Pro) in a two-step reaction: proline is first activated by ATP to form Pro-AMP and then transferred to the acceptor end of tRNA(Pro). The polypeptide is Proline--tRNA ligase 2 (Bacillus cereus (strain ATCC 14579 / DSM 31 / CCUG 7414 / JCM 2152 / NBRC 15305 / NCIMB 9373 / NCTC 2599 / NRRL B-3711)).